A 281-amino-acid chain; its full sequence is Sulfur carrier protein FdhD (281 aa).

Cys117 serves as the catalytic Cysteine persulfide intermediate.

This sequence belongs to the FdhD family.

It localises to the cytoplasm. In terms of biological role, required for formate dehydrogenase (FDH) activity. Acts as a sulfur carrier protein that transfers sulfur from IscS to the molybdenum cofactor prior to its insertion into FDH. In Xanthomonas axonopodis pv. citri (strain 306), this protein is Sulfur carrier protein FdhD.